A 318-amino-acid chain; its full sequence is Cytochrome f (318 aa).

An N-terminal signal peptide occupies residues 1–33 (MKNTFSWIKKEITRSISLSLMIYIITRTSISNA). Residues Tyr-34, Cys-54, Cys-57, and His-58 each coordinate heme. Residues 284-304 (VQGLLFFLASVILAQIFLVLK) traverse the membrane as a helical segment.

It belongs to the cytochrome f family. In terms of assembly, the 4 large subunits of the cytochrome b6-f complex are cytochrome b6, subunit IV (17 kDa polypeptide, petD), cytochrome f and the Rieske protein, while the 4 small subunits are PetG, PetL, PetM and PetN. The complex functions as a dimer. Requires heme as cofactor.

The protein resides in the plastid. It localises to the chloroplast thylakoid membrane. In terms of biological role, component of the cytochrome b6-f complex, which mediates electron transfer between photosystem II (PSII) and photosystem I (PSI), cyclic electron flow around PSI, and state transitions. The protein is Cytochrome f of Oenothera biennis (German evening primrose).